A 235-amino-acid polypeptide reads, in one-letter code: Endonuclease V (235 aa).

Asp-47 and Asp-115 together coordinate Mg(2+).

It belongs to the endonuclease V family. Requires Mg(2+) as cofactor.

Its subcellular location is the cytoplasm. It carries out the reaction Endonucleolytic cleavage at apurinic or apyrimidinic sites to products with a 5'-phosphate.. Its function is as follows. DNA repair enzyme involved in the repair of deaminated bases. Selectively cleaves double-stranded DNA at the second phosphodiester bond 3' to a deoxyinosine leaving behind the intact lesion on the nicked DNA. This chain is Endonuclease V, found in Myxococcus xanthus (strain DK1622).